The chain runs to 581 residues: Probable peptidoglycan D,D-transpeptidase PenA (581 aa).

The chain crosses the membrane as a helical span at residues 28–48 (ISFVLMAIAVLFAGLIARGLY). Ser-310 serves as the catalytic Acyl-ester intermediate.

It belongs to the transpeptidase family. FtsI subfamily.

It is found in the cell inner membrane. It carries out the reaction Preferential cleavage: (Ac)2-L-Lys-D-Ala-|-D-Ala. Also transpeptidation of peptidyl-alanyl moieties that are N-acyl substituents of D-alanine.. Its pathway is cell wall biogenesis; peptidoglycan biosynthesis. Catalyzes cross-linking of the peptidoglycan cell wall at the division septum. The protein is Probable peptidoglycan D,D-transpeptidase PenA of Neisseria meningitidis serogroup A / serotype 4A (strain DSM 15465 / Z2491).